Reading from the N-terminus, the 152-residue chain is Calmodulin-like protein 2 (152 aa).

4 consecutive EF-hand domains span residues 1–36 (MDRGELSRVFQMFDKNGDGKIAKNELKDFFKSVGIM), 37–72 (VPENEINEMIAKMDVNGDGAMDIDEFGSLYQEMVEE), 74–109 (EEEEDMREAFRVFDQNGDGFITDEELRSVLASMGLK), and 112–147 (RTLEDCKKMISKVDVDGDGMVNFKEFKQMMRGGGFA). Ca(2+) contacts are provided by Asp14, Asn16, Asp18, Lys20, Glu25, Asp50, Asn52, Asp54, Glu61, Asp87, Asn89, Asp91, Glu98, Asp125, Asp127, Asp129, Met131, and Glu136.

This sequence belongs to the calmodulin family.

Its function is as follows. Potential calcium sensor that is required for pollen tube attraction for ovule fertilization. This is Calmodulin-like protein 2 (CML2) from Arabidopsis thaliana (Mouse-ear cress).